We begin with the raw amino-acid sequence, 334 residues long: L-lactate dehydrogenase B chain (334 aa).

Alanine 2 carries the N-acetylalanine modification. At lysine 7 the chain carries N6-acetyllysine. NAD(+)-binding positions include 30 to 58 (GQVG…LEDK) and arginine 100. Serine 44 is subject to Phosphoserine. At lysine 58 the chain carries N6-acetyllysine. Arginine 107 lines the substrate pocket. Lysine 119 bears the N6-acetyllysine mark. Residue asparagine 139 coordinates NAD(+). Residues asparagine 139 and arginine 170 each coordinate substrate. Histidine 194 (proton acceptor) is an active-site residue. Tyrosine 240 carries the phosphotyrosine modification. Position 249 (threonine 249) interacts with substrate. The residue at position 329 (lysine 329) is an N6-acetyllysine.

It belongs to the LDH/MDH superfamily. LDH family. Homotetramer. Interacts with PTEN upstream reading frame protein MP31; the interaction leads to inhibition of mitochondrial lactate dehydrogenase activity, preventing conversion of lactate to pyruvate in mitochondria.

It is found in the cytoplasm. The protein localises to the mitochondrion inner membrane. The enzyme catalyses (S)-lactate + NAD(+) = pyruvate + NADH + H(+). The protein operates within fermentation; pyruvate fermentation to lactate; (S)-lactate from pyruvate: step 1/1. In terms of biological role, interconverts simultaneously and stereospecifically pyruvate and lactate with concomitant interconversion of NADH and NAD(+). This is L-lactate dehydrogenase B chain (LDHB) from Sus scrofa (Pig).